The following is a 315-amino-acid chain: Mycothiol acetyltransferase (315 aa).

N-acetyltransferase domains are found at residues 4–141 (LDWR…RPLR) and 152–315 (VVIR…GTDN). Glu-36 lines the 1D-myo-inositol 2-(L-cysteinylamino)-2-deoxy-alpha-D-glucopyranoside pocket. Residues 80–82 (LVV) and 88–93 (RRGIGT) contribute to the acetyl-CoA site. 1D-myo-inositol 2-(L-cysteinylamino)-2-deoxy-alpha-D-glucopyranoside-binding residues include Glu-179, Lys-224, and Glu-234. Acetyl-CoA is bound by residues 238–240 (LGV) and 245–251 (QRRGLGQ). 1D-myo-inositol 2-(L-cysteinylamino)-2-deoxy-alpha-D-glucopyranoside is bound at residue Tyr-282. Residue 287 to 292 (NVAAVR) coordinates acetyl-CoA.

This sequence belongs to the acetyltransferase family. MshD subfamily. Monomer.

The enzyme catalyses 1D-myo-inositol 2-(L-cysteinylamino)-2-deoxy-alpha-D-glucopyranoside + acetyl-CoA = mycothiol + CoA + H(+). In terms of biological role, catalyzes the transfer of acetyl from acetyl-CoA to desacetylmycothiol (Cys-GlcN-Ins) to form mycothiol. The sequence is that of Mycothiol acetyltransferase from Mycobacterium bovis (strain ATCC BAA-935 / AF2122/97).